Here is a 1370-residue protein sequence, read N- to C-terminus: Putative surface protein SA2285 (1370 aa).

Residues 1–50 (MRDKKGPVNKRVDFLSNKLNKYSIRKFTVGTASILIGSLMYLGTQQEAEA) form the signal peptide. 3 disordered regions span residues 77-116 (NKDT…EDTP), 439-472 (KFNP…NPLT), and 495-1344 (EYGP…TGLE). 24 stretches are compositionally biased toward basic and acidic residues: residues 96-116 (DTIE…EDTP), 450-460 (KVTREGQKGEK), 504-522 (GHRD…EEVP), 553-569 (SIVE…RKFN), 578-588 (KVTREGQKGEK), 605-618 (SKGE…KDPI), 632-650 (GHRD…EEVP), 681-697 (SIVE…RKFN), 706-716 (KVTREGQKGEK), 733-746 (SKGE…KDPI), 760-778 (GHRD…EEVP), 809-825 (SIVE…RKFN), 834-844 (KVTREGQKGEK), 861-874 (SKGE…KDPI), 888-906 (GHRD…EEVP), 937-953 (SIVE…RKFN), 962-972 (KVTREGQKGEK), 989-1002 (SKGE…KDPI), 1016-1034 (GHRD…EEVP), 1065-1081 (SIVE…RKFN), 1090-1100 (KVTREGQKGEK), 1117-1130 (SKGE…KDPV), 1174-1185 (KVIEEPVDDVIK), and 1202-1221 (FETK…RVKQ). The G5 1 domain occupies 418–500 (SAKNNNRIRK…NELTEYGPET (83 aa)). One can recognise a G5 2 domain in the interval 546-628 (YGPVKGDSIV…NELTEYGPET (83 aa)). The G5 3 domain maps to 674–756 (YGPVKGDSIV…NELTEYGPET (83 aa)). The G5 4 domain maps to 802–884 (YGPVKGDSIV…NELTEYGPET (83 aa)). A G5 5 domain is found at 930 to 1012 (YGPVKGDSIV…NELTEYGPET (83 aa)). A G5 6 domain is found at 1058–1140 (YGPVKGDSIV…NELTEFGGEK (83 aa)). Residues 1186–1268 (HGPKTGTPET…DKIVEFGGEK (83 aa)) enclose the G5 7 domain. A compositionally biased stretch (polar residues) spans 1224-1238 (QPGSKTITTPITVNP). Residues 1252 to 1282 (EITKQPVDKIVEFGGEKPKDPKGPENPEKPS) are compositionally biased toward basic and acidic residues. The LPXTG sorting signal motif lies at 1338–1342 (LPKTG). Pentaglycyl murein peptidoglycan amidated threonine is present on T1341. The propeptide at 1342–1370 (GLESTQKGLIFSSIIGIAGLMLLARRRKN) is removed by sortase.

It localises to the secreted. It is found in the cell wall. This is Putative surface protein SA2285 from Staphylococcus aureus (strain N315).